The chain runs to 152 residues: MIKERTFLAIKPDGVQRGYIAEIIGRFEKKGFKLVGLKQLIPSKQLAQDHYGVHRERPFFKDLVNFISSGPVVAMIWEGEGVILSARKIIGATKPLEAEPGTIRGDLAIDIGRNIIHGSDGEETAKFEINLWFDQHEICDWETSDSEWRVES.

The ATP site is built by Lys11, Phe59, Arg87, Thr93, Arg104, and Asn114. Residue His117 is the Pros-phosphohistidine intermediate of the active site.

The protein belongs to the NDK family. Homotetramer. Mg(2+) is required as a cofactor.

The protein resides in the cytoplasm. It carries out the reaction a 2'-deoxyribonucleoside 5'-diphosphate + ATP = a 2'-deoxyribonucleoside 5'-triphosphate + ADP. The enzyme catalyses a ribonucleoside 5'-diphosphate + ATP = a ribonucleoside 5'-triphosphate + ADP. Its function is as follows. Major role in the synthesis of nucleoside triphosphates other than ATP. The ATP gamma phosphate is transferred to the NDP beta phosphate via a ping-pong mechanism, using a phosphorylated active-site intermediate. This Prochlorococcus marinus (strain MIT 9515) protein is Nucleoside diphosphate kinase.